A 43-amino-acid polypeptide reads, in one-letter code: uncharacterized protein (43 aa).

This is an uncharacterized protein from Dictyostelium discoideum (Social amoeba).